We begin with the raw amino-acid sequence, 236 residues long: ATP synthase subunit a (236 aa).

The next 5 helical transmembrane spans lie at 17–37, 80–100, 114–134, 179–199, and 208–228; these read LANV…AVLA, MTLI…SVVI, VVTL…GIKL, ILLA…IAAI, and FSIF…MVYM.

This sequence belongs to the ATPase A chain family. In terms of assembly, F-type ATPases have 2 components, CF(1) - the catalytic core - and CF(0) - the membrane proton channel. CF(1) has five subunits: alpha(3), beta(3), gamma(1), delta(1), epsilon(1). CF(0) has three main subunits: a(1), b(2) and c(9-12). The alpha and beta chains form an alternating ring which encloses part of the gamma chain. CF(1) is attached to CF(0) by a central stalk formed by the gamma and epsilon chains, while a peripheral stalk is formed by the delta and b chains.

The protein localises to the cell membrane. Key component of the proton channel; it plays a direct role in the translocation of protons across the membrane. This is ATP synthase subunit a from Anoxybacillus flavithermus (strain DSM 21510 / WK1).